The following is a 362-amino-acid chain: Probable protein phosphatase 2C 11 (362 aa).

A PPM-type phosphatase domain is found at 23 to 329; that stretch reads KLGLSSMQGW…DNMTMVLVQF (307 aa). Residues Asp-57, Gly-58, Asp-272, and Asp-320 each contribute to the Mn(2+) site.

Belongs to the PP2C family. Mg(2+) is required as a cofactor. The cofactor is Mn(2+).

It catalyses the reaction O-phospho-L-seryl-[protein] + H2O = L-seryl-[protein] + phosphate. It carries out the reaction O-phospho-L-threonyl-[protein] + H2O = L-threonyl-[protein] + phosphate. This is Probable protein phosphatase 2C 11 from Oryza sativa subsp. japonica (Rice).